The sequence spans 101 residues: ATP-dependent Clp protease adapter protein ClpS (101 aa).

Residues 1–24 form a disordered region; the sequence is MVVASAPAKPGSVGQQESASRDAT. Residues 13–23 are compositionally biased toward polar residues; that stretch reads VGQQESASRDA.

It belongs to the ClpS family. Binds to the N-terminal domain of the chaperone ClpA.

In terms of biological role, involved in the modulation of the specificity of the ClpAP-mediated ATP-dependent protein degradation. The sequence is that of ATP-dependent Clp protease adapter protein ClpS from Mycobacterium marinum (strain ATCC BAA-535 / M).